A 258-amino-acid chain; its full sequence is Type III pantothenate kinase (258 aa).

6–13 is a binding site for ATP; the sequence is DAGNTRIK. Substrate-binding positions include Tyr98 and 105-108; that span reads GSDR. Catalysis depends on Asp107, which acts as the Proton acceptor. Residue Thr131 coordinates ATP. Thr184 lines the substrate pocket.

The protein belongs to the type III pantothenate kinase family. Homodimer. The cofactor is NH4(+). K(+) is required as a cofactor.

The protein localises to the cytoplasm. It carries out the reaction (R)-pantothenate + ATP = (R)-4'-phosphopantothenate + ADP + H(+). It participates in cofactor biosynthesis; coenzyme A biosynthesis; CoA from (R)-pantothenate: step 1/5. Catalyzes the phosphorylation of pantothenate (Pan), the first step in CoA biosynthesis. This Herminiimonas arsenicoxydans protein is Type III pantothenate kinase.